Reading from the N-terminus, the 263-residue chain is Endonuclease 8 (263 aa).

Residue Pro-2 is the Schiff-base intermediate with DNA of the active site. Catalysis depends on Glu-3, which acts as the Proton donor. The Proton donor; for beta-elimination activity role is filled by Lys-53. DNA is bound by residues Gln-70, Arg-125, and Asn-169. The FPG-type zinc finger occupies 229-263 (KVFHRDGESCERCGGIIERTMLSSRPFYWCPHCQR). Catalysis depends on Arg-253, which acts as the Proton donor; for delta-elimination activity.

The protein belongs to the FPG family. The cofactor is Zn(2+).

It carries out the reaction 2'-deoxyribonucleotide-(2'-deoxyribose 5'-phosphate)-2'-deoxyribonucleotide-DNA = a 3'-end 2'-deoxyribonucleotide-(2,3-dehydro-2,3-deoxyribose 5'-phosphate)-DNA + a 5'-end 5'-phospho-2'-deoxyribonucleoside-DNA + H(+). Involved in base excision repair of DNA damaged by oxidation or by mutagenic agents. Acts as a DNA glycosylase that recognizes and removes damaged bases. Has a preference for oxidized pyrimidines, such as thymine glycol, 5,6-dihydrouracil and 5,6-dihydrothymine. Has AP (apurinic/apyrimidinic) lyase activity and introduces nicks in the DNA strand. Cleaves the DNA backbone by beta-delta elimination to generate a single-strand break at the site of the removed base with both 3'- and 5'-phosphates. This is Endonuclease 8 from Pectobacterium carotovorum subsp. carotovorum (strain PC1).